The chain runs to 133 residues: Small ribosomal subunit protein uS8 (133 aa).

It belongs to the universal ribosomal protein uS8 family. Part of the 30S ribosomal subunit. Contacts proteins S5 and S12.

One of the primary rRNA binding proteins, it binds directly to 16S rRNA central domain where it helps coordinate assembly of the platform of the 30S subunit. The polypeptide is Small ribosomal subunit protein uS8 (Chlamydia caviae (strain ATCC VR-813 / DSM 19441 / 03DC25 / GPIC) (Chlamydophila caviae)).